A 456-amino-acid polypeptide reads, in one-letter code: Methylenetetrahydrofolate--tRNA-(uracil-5-)-methyltransferase TrmFO (456 aa).

12–17 (GGGLAG) contributes to the FAD binding site.

Belongs to the MnmG family. TrmFO subfamily. FAD is required as a cofactor.

The protein localises to the cytoplasm. The catalysed reaction is uridine(54) in tRNA + (6R)-5,10-methylene-5,6,7,8-tetrahydrofolate + NADH + H(+) = 5-methyluridine(54) in tRNA + (6S)-5,6,7,8-tetrahydrofolate + NAD(+). It carries out the reaction uridine(54) in tRNA + (6R)-5,10-methylene-5,6,7,8-tetrahydrofolate + NADPH + H(+) = 5-methyluridine(54) in tRNA + (6S)-5,6,7,8-tetrahydrofolate + NADP(+). In terms of biological role, catalyzes the folate-dependent formation of 5-methyl-uridine at position 54 (M-5-U54) in all tRNAs. This is Methylenetetrahydrofolate--tRNA-(uracil-5-)-methyltransferase TrmFO from Picosynechococcus sp. (strain ATCC 27264 / PCC 7002 / PR-6) (Agmenellum quadruplicatum).